The chain runs to 264 residues: Hydroxyethylthiazole kinase (264 aa).

Residue methionine 45 coordinates substrate. The ATP site is built by arginine 121 and serine 167. Residue glycine 194 participates in substrate binding.

The protein belongs to the Thz kinase family. Requires Mg(2+) as cofactor.

The enzyme catalyses 5-(2-hydroxyethyl)-4-methylthiazole + ATP = 4-methyl-5-(2-phosphooxyethyl)-thiazole + ADP + H(+). It functions in the pathway cofactor biosynthesis; thiamine diphosphate biosynthesis; 4-methyl-5-(2-phosphoethyl)-thiazole from 5-(2-hydroxyethyl)-4-methylthiazole: step 1/1. In terms of biological role, catalyzes the phosphorylation of the hydroxyl group of 4-methyl-5-beta-hydroxyethylthiazole (THZ). This is Hydroxyethylthiazole kinase from Aliivibrio salmonicida (strain LFI1238) (Vibrio salmonicida (strain LFI1238)).